The primary structure comprises 115 residues: Large ribosomal subunit protein P2 (115 aa).

Residue Met-1 is modified to N-acetylmethionine. Phosphoserine occurs at positions 17 and 19. Lys-21 bears the N6-acetyllysine; alternate mark. Residue Lys-21 is modified to N6-succinyllysine; alternate. Residues 76–90 (APGSAAPAAGSAPAA) show a composition bias toward low complexity. Residues 76–115 (APGSAAPAAGSAPAAAEERKEEKKEESEESDDDMGFGLFD) form a disordered region. Ser-79 and Ser-86 each carry phosphoserine. Basic and acidic residues predominate over residues 91-101 (AEERKEEKKEE). 2 positions are modified to phosphoserine: Ser-102 and Ser-105.

This sequence belongs to the eukaryotic ribosomal protein P1/P2 family. In terms of assembly, heterodimer with RPLP1 at the lateral ribosomal stalk of the large ribosomal subunit.

Plays an important role in the elongation step of protein synthesis. The chain is Large ribosomal subunit protein P2 (RPLP2) from Equus caballus (Horse).